We begin with the raw amino-acid sequence, 278 residues long: S-formylglutathione hydrolase YeiG (278 aa).

Catalysis depends on charge relay system residues serine 145, aspartate 223, and histidine 256.

This sequence belongs to the esterase D family.

The enzyme catalyses S-formylglutathione + H2O = formate + glutathione + H(+). In terms of biological role, serine hydrolase involved in the detoxification of formaldehyde. Hydrolyzes S-formylglutathione to glutathione and formate. The chain is S-formylglutathione hydrolase YeiG (yeiG) from Escherichia coli O157:H7.